The primary structure comprises 376 residues: MGCFFSKKSRRKSPKKDAALPTGDESATGNDLAETNNTALGSNSNQEAPKQYSWDKREKVDPKDFMLTGLKNETVGRLPGKLNGQQFVIQDCENCNIFVLDHSATITIDDCVNCRIVLGPVKGSVFFRDCKDIKCVVACQQFRTRDCKKMDVFLCCATQPIIESSTGMKFGCFQYYYPELAFHFKDAGLSIFNNNWSNIHDFTPVSGETNWSLLPEDAVVLDHVPLPDPESEFKSVRIATEAGRSIVPLTKGSRRTESEESCLFVFFAGDYTTANARKLIDEATAKGFVLIQTKEVSMRPEDVSRVFQNNAESLTEWITKGPVVALELNGDGVVEACRSFANEVFNGTQLFVSESKNTSSRDVDNFFNFADMQMGL.

Residues 1-55 (MGCFFSKKSRRKSPKKDAALPTGDESATGNDLAETNNTALGSNSNQEAPKQYSWD) form a disordered region. A lipid anchor (N-myristoyl glycine) is attached at glycine 2. Cysteine 3 carries the S-palmitoyl cysteine lipid modification. The segment covering 25–48 (ESATGNDLAETNNTALGSNSNQEA) has biased composition (polar residues). A C-CAP/cofactor C-like domain is found at 49-204 (PKQYSWDKRE…NWSNIHDFTP (156 aa)). GTP contacts are provided by residues 123-124 (GS) and 140-143 (QQFR).

The protein belongs to the TBCC family. Myristoylated on Gly-2; which may be required for membrane targeting. In terms of processing, palmitoylated on Cys-3; which may be required for plasma membrane targeting. In terms of tissue distribution, in the retina, detected in both rod and cone photoreceptors (at protein level). Has strongest expression in the retinal outer nuclear layer (ONL) and weaker expression in the outer plexiform layer (OPL) and inner plexiform layer (IPL) (at protein level). Expressed in all tissues tested.

Its subcellular location is the cell membrane. It is found in the cell projection. It localises to the cilium. In terms of biological role, acts as a GTPase-activating protein (GAP) involved in trafficking between the Golgi and the ciliary membrane. Acts as a GTPase-activating protein (GAP) for tubulin in concert with tubulin-specific chaperone C, but does not enhance tubulin heterodimerization. In the retina, required for maintenance of rod and cone photoreceptor cells. May have a role in normal retinal localization of the transducins GNB1 and GNAT1, and the rhodopsin kinase GRK1. The sequence is that of Protein XRP2 from Danio rerio (Zebrafish).